A 277-amino-acid polypeptide reads, in one-letter code: Large ribosomal subunit protein uL2c (277 aa).

A disordered region spans residues 226–249 (NPIDHPHGGGEGRAPIGREKPLTP). Residues 229 to 246 (DHPHGGGEGRAPIGREKP) show a composition bias toward basic and acidic residues.

The protein belongs to the universal ribosomal protein uL2 family. Part of the 50S ribosomal subunit.

It is found in the plastid. The protein localises to the chloroplast. This is Large ribosomal subunit protein uL2c (rpl2) from Physcomitrium patens (Spreading-leaved earth moss).